The sequence spans 86 residues: UPF0437 protein Ava_4254 (86 aa).

The protein belongs to the UPF0437 family.

In Trichormus variabilis (strain ATCC 29413 / PCC 7937) (Anabaena variabilis), this protein is UPF0437 protein Ava_4254.